Here is a 441-residue protein sequence, read N- to C-terminus: Ribulose bisphosphate carboxylase large chain (441 aa).

2 residues coordinate substrate: Asn89 and Thr139. Lys141 serves as the catalytic Proton acceptor. Lys143 contributes to the substrate binding site. Mg(2+) contacts are provided by Lys167, Asp169, and Glu170. N6-carboxylysine is present on Lys167. The Proton acceptor role is filled by His260. Positions 261, 293, and 345 each coordinate substrate.

It belongs to the RuBisCO large chain family. Type I subfamily. As to quaternary structure, heterohexadecamer of 8 large chains and 8 small chains; disulfide-linked. The disulfide link is formed within the large subunit homodimers. The cofactor is Mg(2+). Post-translationally, the disulfide bond which can form in the large chain dimeric partners within the hexadecamer appears to be associated with oxidative stress and protein turnover.

It localises to the plastid. It is found in the chloroplast. The enzyme catalyses 2 (2R)-3-phosphoglycerate + 2 H(+) = D-ribulose 1,5-bisphosphate + CO2 + H2O. It catalyses the reaction D-ribulose 1,5-bisphosphate + O2 = 2-phosphoglycolate + (2R)-3-phosphoglycerate + 2 H(+). Its function is as follows. RuBisCO catalyzes two reactions: the carboxylation of D-ribulose 1,5-bisphosphate, the primary event in carbon dioxide fixation, as well as the oxidative fragmentation of the pentose substrate in the photorespiration process. Both reactions occur simultaneously and in competition at the same active site. In Polemonium reptans (Greek valerian), this protein is Ribulose bisphosphate carboxylase large chain.